Consider the following 808-residue polypeptide: Ribosome biogenesis protein BOP1 homolog (808 aa).

Residues Met-1–Thr-56 are disordered. Composition is skewed to low complexity over residues Arg-12–Pro-24 and Ala-33–Asp-50. WD repeat units follow at residues Gly-430–Arg-469, Lys-640–Lys-680, Ser-682–Lys-720, Ser-724–Lys-766, and Lys-777–Glu-808.

This sequence belongs to the WD repeat BOP1/ERB1 family.

Its subcellular location is the nucleus. The protein localises to the nucleolus. It localises to the nucleoplasm. Its function is as follows. Required for maturation of ribosomal RNAs and formation of the large ribosomal subunit. In Leishmania infantum, this protein is Ribosome biogenesis protein BOP1 homolog.